The primary structure comprises 281 residues: Acidic leucine-rich nuclear phosphoprotein 32-related protein (281 aa).

4 LRR repeats span residues 29-52 (YESLNELILDGKKLTSIKNEEKEL), 56-78 (FKNLERLCLNQTGIQTLENIPSI), 79-103 (ATLNVLELTDNHLSSVEVLKYIVQN), and 105-128 (PNIKTLEIGGNHFKNINDFETLKE). The region spanning 140–178 (NPFADNPNYRKELFEFLPNVKIIDCYNKEGMEVLSSDEE) is the LRRCT domain. Residues 197–244 (FKDEDDEDEEFVPNDNEDDDEDDELDDDLEDEDMEDLDKEDLDKEDYD) show a composition bias toward acidic residues. The tract at residues 197–281 (FKDEDDEDEE…DMDLKKTKLE (85 aa)) is disordered. Over residues 245–266 (IDTKETEGVNKDEKSNKRKQDA) the composition is skewed to basic and acidic residues.

Belongs to the ANP32 family.

In Plasmodium falciparum (isolate 3D7), this protein is Acidic leucine-rich nuclear phosphoprotein 32-related protein.